Here is a 759-residue protein sequence, read N- to C-terminus: Secretin XpsD (759 aa).

A signal peptide spans 1 to 21 (MSERMTPRLFPVSLLIGLLAG). The N-palmitoyl cysteine moiety is linked to residue Cys-22. Cys-22 carries the S-diacylglycerol cysteine lipid modification. A compositionally biased stretch (low complexity) spans 40 to 51 (VGAAGATQTTAE). The interval 40–69 (VGAAGATQTTAEQRADGNASAKPTPVIRRG) is disordered. An N0 region spans residues 92–187 (GSATFNFEGE…APSTASPSAA (96 aa)). An N1 region spans residues 189–253 (GFEVRVVPLK…VQIFDVDWLS (65 aa)). The interval 254–323 (GMSVGVFPIQ…IQQWLDRIDS (70 aa)) is N2. The interval 326–474 (GGVRLFSYEL…SIRDVIEKLD (149 aa)) is N3. Residues 352–434 (GGRGNGGNSG…PPSTNQNGSV (83 aa)) are disordered. Gly residues predominate over residues 392 to 401 (ATGGDIGGTS). A compositionally biased stretch (polar residues) spans 425 to 434 (PPSTNQNGSV). The tract at residues 479-734 (QVHIEAQIAE…VLITPSIVRN (256 aa)) is secretin. Residues 736–759 (QDARDLTDEYGSKFKSMRPMDVHK) are s domain.

Belongs to the bacterial secretin family. GSP D subfamily. Forms a cylindrical channel with 15 subunits. Binds to XpsN.

The protein localises to the cell outer membrane. Involved in a type II secretion system (T2SS, formerly general secretion pathway, GSP) for the export of proteins. This subunit forms the outer membrane channel. The polypeptide is Secretin XpsD (xpsD) (Xanthomonas campestris pv. campestris (strain ATCC 33913 / DSM 3586 / NCPPB 528 / LMG 568 / P 25)).